The sequence spans 489 residues: Adenosylhomocysteinase (489 aa).

Substrate-binding residues include threonine 68, aspartate 151, and glutamate 213. Position 214-216 (214-216) interacts with NAD(+); the sequence is TTT. Substrate contacts are provided by lysine 243 and aspartate 247. NAD(+) contacts are provided by residues asparagine 248, 277–282, glutamate 300, asparagine 335, 356–358, and asparagine 403; these read GYGDVG and IGH.

It belongs to the adenosylhomocysteinase family. NAD(+) serves as cofactor.

The protein resides in the cytoplasm. It catalyses the reaction S-adenosyl-L-homocysteine + H2O = L-homocysteine + adenosine. Its pathway is amino-acid biosynthesis; L-homocysteine biosynthesis; L-homocysteine from S-adenosyl-L-homocysteine: step 1/1. Its function is as follows. May play a key role in the regulation of the intracellular concentration of adenosylhomocysteine. The polypeptide is Adenosylhomocysteinase (Mycobacterium sp. (strain KMS)).